The sequence spans 418 residues: Imidazolonepropionase (418 aa).

Positions 80 and 82 each coordinate Fe(3+). Residues His-80 and His-82 each coordinate Zn(2+). 4-imidazolone-5-propanoate contacts are provided by Arg-89, Tyr-152, and His-185. Tyr-152 is an N-formimidoyl-L-glutamate binding site. His-250 contributes to the Fe(3+) binding site. His-250 serves as a coordination point for Zn(2+). Gln-253 is a 4-imidazolone-5-propanoate binding site. Asp-325 contributes to the Fe(3+) binding site. Zn(2+) is bound at residue Asp-325. N-formimidoyl-L-glutamate-binding residues include Asn-327 and Gly-329. A 4-imidazolone-5-propanoate-binding site is contributed by Ser-330.

Belongs to the metallo-dependent hydrolases superfamily. HutI family. Zn(2+) is required as a cofactor. The cofactor is Fe(3+).

The protein resides in the cytoplasm. It catalyses the reaction 4-imidazolone-5-propanoate + H2O = N-formimidoyl-L-glutamate. It participates in amino-acid degradation; L-histidine degradation into L-glutamate; N-formimidoyl-L-glutamate from L-histidine: step 3/3. Catalyzes the hydrolytic cleavage of the carbon-nitrogen bond in imidazolone-5-propanoate to yield N-formimidoyl-L-glutamate. It is the third step in the universal histidine degradation pathway. This is Imidazolonepropionase from Solibacter usitatus (strain Ellin6076).